Consider the following 467-residue polypeptide: Dimethylamine methyltransferase MtbB3 (467 aa).

A non-standard amino acid (pyrrolysine) is located at residue pyrrolysine 356.

It belongs to the dimethylamine methyltransferase family.

It carries out the reaction Co(I)-[dimethylamine-specific corrinoid protein] + dimethylamine + H(+) = methyl-Co(III)-[dimethylamine-specific corrinoid protein] + methylamine. It functions in the pathway one-carbon metabolism; methanogenesis from dimethylamine. In terms of biological role, catalyzes the transfer of a methyl group from dimethylamine to the corrinoid cofactor of MtbC. The protein is Dimethylamine methyltransferase MtbB3 (mtbB3) of Methanosarcina mazei (strain ATCC BAA-159 / DSM 3647 / Goe1 / Go1 / JCM 11833 / OCM 88) (Methanosarcina frisia).